A 254-amino-acid chain; its full sequence is 5-keto-D-gluconate 5-reductase (254 aa).

Residue Leu-13–Ile-37 coordinates NADP(+). Residue Ser-145 participates in substrate binding. The active-site Proton acceptor is Tyr-158.

It belongs to the short-chain dehydrogenases/reductases (SDR) family.

The catalysed reaction is D-gluconate + NAD(+) = 5-dehydro-D-gluconate + NADH + H(+). It catalyses the reaction D-gluconate + NADP(+) = 5-dehydro-D-gluconate + NADPH + H(+). It functions in the pathway carbohydrate acid metabolism; L-idonate degradation. In terms of biological role, catalyzes the reduction of 5-keto-D-gluconate to D-gluconate, using either NADH or NADPH. Is likely involved in an L-idonate degradation pathway that allows E.coli to utilize L-idonate as the sole carbon and energy source. Is also able to catalyze the reverse reaction in vitro, but the D-gluconate oxidation by the enzyme can only proceed with NAD. In Escherichia coli O6:H1 (strain CFT073 / ATCC 700928 / UPEC), this protein is 5-keto-D-gluconate 5-reductase.